We begin with the raw amino-acid sequence, 125 residues long: Fluoride-specific ion channel FluC (125 aa).

4 helical membrane passes run 5–25 (ILAICMGASVGALARWGLALW), 37–57 (LAANLVGGYLVGVAIASFHLL), 71–91 (GFLGGLTTFSSFSAEVVTMLL), and 97–117 (VALLTAAAHLGGSLFLTWLGI). Positions 74 and 77 each coordinate Na(+).

The protein belongs to the fluoride channel Fluc/FEX (TC 1.A.43) family.

It is found in the cell inner membrane. It carries out the reaction fluoride(in) = fluoride(out). Its activity is regulated as follows. Na(+) is not transported, but it plays an essential structural role and its presence is essential for fluoride channel function. Functionally, fluoride-specific ion channel. Important for reducing fluoride concentration in the cell, thus reducing its toxicity. This is Fluoride-specific ion channel FluC from Variovorax paradoxus (strain S110).